The primary structure comprises 492 residues: Adenylyltransferase and sulfurtransferase uba4 (492 aa).

ATP contacts are provided by residues Gly-99, Asp-120, 127–131 (SNLHR), Lys-144, and 188–189 (DN). Cys-237 and Cys-240 together coordinate Zn(2+). The active-site Glycyl thioester intermediate; for adenylyltransferase activity is Cys-254. The Zn(2+) site is built by Cys-317 and Cys-320. The Rhodanese domain maps to 378-490 (GSKEPTIIDV…WREQIDPDWP (113 aa)). Cys-445 acts as the Cysteine persulfide intermediate; for sulfurtransferase activity in catalysis.

In the N-terminal section; belongs to the HesA/MoeB/ThiF family. UBA4 subfamily. Zn(2+) serves as cofactor.

The protein resides in the cytoplasm. The protein localises to the cytosol. The enzyme catalyses [molybdopterin-synthase sulfur-carrier protein]-C-terminal Gly-Gly + ATP + H(+) = [molybdopterin-synthase sulfur-carrier protein]-C-terminal Gly-Gly-AMP + diphosphate. It carries out the reaction [molybdopterin-synthase sulfur-carrier protein]-C-terminal Gly-Gly-AMP + S-sulfanyl-L-cysteinyl-[cysteine desulfurase] + AH2 = [molybdopterin-synthase sulfur-carrier protein]-C-terminal-Gly-aminoethanethioate + L-cysteinyl-[cysteine desulfurase] + A + AMP + 2 H(+). It participates in tRNA modification; 5-methoxycarbonylmethyl-2-thiouridine-tRNA biosynthesis. Its pathway is cofactor biosynthesis; molybdopterin biosynthesis. Functionally, plays a central role in 2-thiolation of mcm(5)S(2)U at tRNA wobble positions of cytosolic tRNA(Lys), tRNA(Glu) and tRNA(Gln). Also essential during biosynthesis of the molybdenum cofactor. Acts by mediating the C-terminal thiocarboxylation of sulfur carriers urm1 and mocs2a. Its N-terminus first activates urm1 and mocs2a as acyl-adenylates (-COAMP), then the persulfide sulfur on the catalytic cysteine is transferred to urm1 and mocs2a to form thiocarboxylation (-COSH) of their C-terminus. The reaction probably involves hydrogen sulfide that is generated from the persulfide intermediate and that acts as a nucleophile towards urm1 and mocs2a. Subsequently, a transient disulfide bond is formed. Does not use thiosulfate as sulfur donor; nfs1 probably acting as a sulfur donor for thiocarboxylation reactions. The protein is Adenylyltransferase and sulfurtransferase uba4 of Aspergillus clavatus (strain ATCC 1007 / CBS 513.65 / DSM 816 / NCTC 3887 / NRRL 1 / QM 1276 / 107).